We begin with the raw amino-acid sequence, 476 residues long: Adenosylhomocysteinase (476 aa).

Residues Thr67, Asp142, and Glu202 each coordinate substrate. An NAD(+)-binding site is contributed by Thr203–Thr205. The substrate site is built by Lys232 and Asp236. Residues Asn237, Gly266–Gly271, Glu289, Asn324, Ile345–His347, and Asn390 contribute to the NAD(+) site.

This sequence belongs to the adenosylhomocysteinase family. Requires NAD(+) as cofactor.

Its subcellular location is the cytoplasm. The enzyme catalyses S-adenosyl-L-homocysteine + H2O = L-homocysteine + adenosine. It participates in amino-acid biosynthesis; L-homocysteine biosynthesis; L-homocysteine from S-adenosyl-L-homocysteine: step 1/1. In terms of biological role, may play a key role in the regulation of the intracellular concentration of adenosylhomocysteine. The polypeptide is Adenosylhomocysteinase (Prochlorococcus marinus (strain SARG / CCMP1375 / SS120)).